The chain runs to 464 residues: MQPPLFVISVYLLWLKYCDSAPTWKETDATDGNLKSLPEVGEADVEGEVKKALIGIKQMKIMMERREEEHAKLMKALKKCKEEKQEAQKLMNEVQERLEEEEKLCQASSIGSWDGCRPCLESNCIRFYTACQPGWSSVKSMMKQFLKKIYRFLSSQSEDVKDPPAIEQLTKEDLQVVHIENLFSQLAVDAKSLFNMSFYIFKQMQQEFDQAFQLYFMSDVDLMEPYPPALSKEITKKEELGQRWGIPNVFQLFHNFSLSVYGRVQQIIMKTLNAIEDSWEPHKELDQRGMTSEMLPEQNGEMCEEFVKNLSGCLKFRKRCQKCHNYLSEECPDVPELHIEFLEALKLVNVSNQQYDQIVQMTQYHLEDTIYLMEKMQEQFGWVSQLASHNPVTEDIFNSTKAVPKIHGGDSSKQDEIMVDSSSILPSSNFTVQNPPEEGAESSNVIYYMAAKVLQHLKGCFETW.

Positions 1 to 20 (MQPPLFVISVYLLWLKYCDS) are cleaved as a signal peptide. Positions 56–109 (IKQMKIMMERREEEHAKLMKALKKCKEEKQEAQKLMNEVQERLEEEEKLCQASS) form a coiled coil. Cystine bridges form between Cys-105–Cys-331, Cys-116–Cys-323, Cys-119–Cys-320, Cys-124–Cys-313, and Cys-131–Cys-303. N-linked (GlcNAc...) asparagine glycosylation is found at Asn-195, Asn-255, Asn-309, Asn-349, Asn-398, and Asn-429.

The protein belongs to the clusterin family.

The protein localises to the secreted. The chain is Clusterin-like protein 1 from Rattus norvegicus (Rat).